A 637-amino-acid polypeptide reads, in one-letter code: Threonine--tRNA ligase (637 aa).

The TGS domain occupies 1 to 61 (MPVITLPNGS…EQDAALSIVT (61 aa)). Residues 242 to 533 (DHRKLGKKFD…LIENYEGAFP (292 aa)) form a catalytic region. Residues Cys-333, His-384, and His-510 each contribute to the Zn(2+) site.

The protein belongs to the class-II aminoacyl-tRNA synthetase family. As to quaternary structure, homodimer. It depends on Zn(2+) as a cofactor.

The protein localises to the cytoplasm. The catalysed reaction is tRNA(Thr) + L-threonine + ATP = L-threonyl-tRNA(Thr) + AMP + diphosphate + H(+). Functionally, catalyzes the attachment of threonine to tRNA(Thr) in a two-step reaction: L-threonine is first activated by ATP to form Thr-AMP and then transferred to the acceptor end of tRNA(Thr). Also edits incorrectly charged L-seryl-tRNA(Thr). This is Threonine--tRNA ligase from Teredinibacter turnerae (strain ATCC 39867 / T7901).